A 402-amino-acid chain; its full sequence is Tol-Pal system protein TolB (402 aa).

Positions 1–17 are cleaved as a signal peptide; it reads MKKIVAIFLVFLGSLWA.

This sequence belongs to the TolB family. The Tol-Pal system is composed of five core proteins: the inner membrane proteins TolA, TolQ and TolR, the periplasmic protein TolB and the outer membrane protein Pal. They form a network linking the inner and outer membranes and the peptidoglycan layer.

The protein localises to the periplasm. Part of the Tol-Pal system, which plays a role in outer membrane invagination during cell division and is important for maintaining outer membrane integrity. The chain is Tol-Pal system protein TolB from Campylobacter jejuni subsp. jejuni serotype O:2 (strain ATCC 700819 / NCTC 11168).